Reading from the N-terminus, the 205-residue chain is MGPIRIGVGGPVGAGKTQLVERITRALIDEVSMAAITNDIYTIEDAKILAANGVLPEERIVGIETGGCPHTAIREDTSMNDAAIKDLVERFPDLELIFVESGGDNLSATFSPELVDFSIYIIDVAQGEKIPRKAGQGMIKSDLFIINKTDLAPYVGANLDVMVEDAKTFRKNKPFCLTNLRTDDGLDKVLEWIRHEVMMQDLQEA.

10-17 (GPVGAGKT) serves as a coordination point for GTP.

It belongs to the SIMIBI class G3E GTPase family. UreG subfamily. In terms of assembly, homodimer. UreD, UreF and UreG form a complex that acts as a GTP-hydrolysis-dependent molecular chaperone, activating the urease apoprotein by helping to assemble the nickel containing metallocenter of UreC. The UreE protein probably delivers the nickel.

The protein resides in the cytoplasm. Functionally, facilitates the functional incorporation of the urease nickel metallocenter. This process requires GTP hydrolysis, probably effectuated by UreG. The protein is Urease accessory protein UreG of Corynebacterium glutamicum (strain R).